Here is a 488-residue protein sequence, read N- to C-terminus: N-succinylglutamate 5-semialdehyde dehydrogenase (488 aa).

221–226 provides a ligand contact to NAD(+); it reads GSSRTG. Active-site residues include E244 and C278.

This sequence belongs to the aldehyde dehydrogenase family. AstD subfamily.

It catalyses the reaction N-succinyl-L-glutamate 5-semialdehyde + NAD(+) + H2O = N-succinyl-L-glutamate + NADH + 2 H(+). It participates in amino-acid degradation; L-arginine degradation via AST pathway; L-glutamate and succinate from L-arginine: step 4/5. Its function is as follows. Catalyzes the NAD-dependent reduction of succinylglutamate semialdehyde into succinylglutamate. This is N-succinylglutamate 5-semialdehyde dehydrogenase from Pseudomonas syringae pv. tomato (strain ATCC BAA-871 / DC3000).